The sequence spans 214 residues: Glutathione S-transferase 1 (214 aa).

The GST N-terminal domain occupies 2 to 83; the sequence is APMKLYGAVM…YAARKNKPEL (82 aa). Residues serine 12, 41 to 42, 54 to 55, and 67 to 68 each bind glutathione; these read HK, QV, and ES. The GST C-terminal domain maps to 88-214; that stretch reads NLEEAAMVDV…KVAALMKPSA (127 aa).

The protein belongs to the GST superfamily. Phi family. As to quaternary structure, homodimer or heterodimer of GST-I and GST-IV (=GST-II). In terms of tissue distribution, expressed in the stem and leaves, lower levels are seen in the pollen and endosperm.

The catalysed reaction is RX + glutathione = an S-substituted glutathione + a halide anion + H(+). Its function is as follows. Conjugation of reduced glutathione to a wide number of exogenous and endogenous hydrophobic electrophiles. Involved in the detoxification of certain herbicides. In Zea mays (Maize), this protein is Glutathione S-transferase 1 (GST1).